Here is a 335-residue protein sequence, read N- to C-terminus: MKGLLLILASLVAIATGQDCPAYYVRSSSGASCYRYFNIRVLHRMASEFCEMVTPCGNGPSRMGALASISSPIENHEVYRMVASFSQDNQMENEAWLGWNTQSPRFWEDGTPAYPNGFAGFHQSGSYTSWPSWRPGMPTSGWPVNPANPWTPPPGRAPVMKGQHVTPQQPGQRPNLGPEWDLVEATAMRAFVCEVAAGQNIPPGQQPGFGGQQPGFGGRQPGFGGQQPGFGQQPGFGGRQPGFGGRQPGFGGQQPGFGGQQPGFGGQQPGFGGQQPGFGGQQPGFGGQQPGFGGQQPGFGGGPQRPGMGGQPNSPNPRFNRPRMLQEAETDVTGS.

A signal peptide spans 1–17 (MKGLLLILASLVAIATG). The C-type lectin domain occupies 29–194 (SGASCYRYFN…ATAMRAFVCE (166 aa)). Residues Cys50 and Cys193 are joined by a disulfide bond. Residues 199–335 (QNIPPGQQPG…QEAETDVTGS (137 aa)) form a disordered region. Residues 207-310 (PGFGGQQPGF…GGPQRPGMGG (104 aa)) show a composition bias toward gly residues. Over residues 311–323 (QPNSPNPRFNRPR) the composition is skewed to low complexity.

This sequence belongs to the SM50 family. Embryo spicule.

The protein localises to the secreted. In terms of biological role, major matrix protein of the sea urchin embryo spicule which directs crystal growth in certain orientations and inhibit growth in others. This is 34 kDa spicule matrix protein from Lytechinus pictus (Painted sea urchin).